We begin with the raw amino-acid sequence, 179 residues long: uncharacterized protein (179 aa).

The protein resides in the plastid. It localises to the cyanelle. This is an uncharacterized protein from Cyanophora paradoxa.